The following is a 175-amino-acid chain: MSDTINLTRRGFLKVSGSGVAVAATLSPIASANAQKAPADAGRTTLQYPATQVSVAKNLKANEPVSFTYPDTSSPCVAVKLGSPVPGGVGPNNDIVAYSVLCTHMGCPTSYDKSSKTFKCPCHFTEFDAEKAGQMICGQATENLPRVLLRYDEASDALTAVGVDGLIYGRQANVI.

The tat-type signal signal peptide spans 1–32; sequence MSDTINLTRRGFLKVSGSGVAVAATLSPIASA. One can recognise a Rieske domain in the interval 62–158; it reads NEPVSFTYPD…LRYDEASDAL (97 aa). Cysteine 102, histidine 104, cysteine 120, and histidine 123 together coordinate [2Fe-2S] cluster. An intrachain disulfide couples cysteine 107 to cysteine 122.

Belongs to the AOX family. In terms of assembly, heterodimer consisting of a large and a small subunit. [2Fe-2S] cluster is required as a cofactor. In terms of processing, predicted to be exported by the Tat system. The position of the signal peptide cleavage has not been experimentally proven.

It catalyses the reaction 2 oxidized [azurin] + arsenite + H2O = 2 reduced [azurin] + arsenate + 3 H(+). Involved in the detoxification of arsenic. Oxidizes As(III)O3(3-) (arsenite) to the somewhat less toxic As(V)O4(3-) (arsenate). The protein is Arsenite oxidase subunit AioB (aioB) of Alcaligenes faecalis.